Consider the following 66-residue polypeptide: Beta-mammal toxin Cv5 (66 aa).

The LCN-type CS-alpha/beta domain occupies 1-66 (KEGYIVNYYD…VWPLPKKKCN (66 aa)). Cystine bridges form between Cys12-Cys65, Cys16-Cys41, Cys25-Cys46, and Cys29-Cys48.

In terms of tissue distribution, expressed by the venom gland.

The protein localises to the secreted. With respect to regulation, is susceptible to be neutralized by human antibodies scFvs 10FG2 and HV. Beta toxins bind voltage-independently at site-4 of sodium channels (Nav) and reduces peak current and shifts the voltage of activation toward more negative potentials thereby affecting sodium channel activation and promoting spontaneous and repetitive firing. This toxin is moderately toxic to mice. In Centruroides villegasi (Scorpion), this protein is Beta-mammal toxin Cv5.